The primary structure comprises 178 residues: Large ribosomal subunit protein uL6 (178 aa).

It belongs to the universal ribosomal protein uL6 family. Part of the 50S ribosomal subunit.

Its function is as follows. This protein binds to the 23S rRNA, and is important in its secondary structure. It is located near the subunit interface in the base of the L7/L12 stalk, and near the tRNA binding site of the peptidyltransferase center. This chain is Large ribosomal subunit protein uL6, found in Arthrobacter sp. (strain FB24).